The sequence spans 553 residues: Formate--tetrahydrofolate ligase (553 aa).

Residue 63–70 coordinates ATP; it reads TPAGEGKT.

This sequence belongs to the formate--tetrahydrofolate ligase family.

The enzyme catalyses (6S)-5,6,7,8-tetrahydrofolate + formate + ATP = (6R)-10-formyltetrahydrofolate + ADP + phosphate. The protein operates within one-carbon metabolism; tetrahydrofolate interconversion. The polypeptide is Formate--tetrahydrofolate ligase (Oenococcus oeni (strain ATCC BAA-331 / PSU-1)).